A 459-amino-acid polypeptide reads, in one-letter code: Elongation factor 1-alpha 4 (459 aa).

The tr-type G domain maps to 5–242; sequence KTHINIVVIG…DCIIPPQRPT (238 aa). Residues 14–21 are G1; it reads GHVDSGKS. The G2 stretch occupies residues 70–74; the sequence is GITID. The interval 91-94 is G3; the sequence is DAPG. Positions 153 to 156 are G4; the sequence is NKMD. The interval 194–196 is G5; sequence SGF. 2 positions are modified to 5-glutamyl glycerylphosphorylethanolamine: E301 and E374.

Belongs to the TRAFAC class translation factor GTPase superfamily. Classic translation factor GTPase family. EF-Tu/EF-1A subfamily.

Its subcellular location is the cytoplasm. Functionally, this protein promotes the GTP-dependent binding of aminoacyl-tRNA to the A-site of ribosomes during protein biosynthesis. This is Elongation factor 1-alpha 4 (eft-4) from Oscheius tipulae.